The primary structure comprises 617 residues: MDFSKLPKIRDEDKESTFGYVHGVSGPVVTACDMAGAAMYELVRVGHSELVGEIIRLEGDMATIQVYEETSGVSVGDPVLRTGKPLSVELGPGIMGAIFDGIQRPLSDISSQTQSIYIPRGVNVSALSRDIKWEFIPSKNLRVGSHITGGDIYGIVNENSLIKHKIMLPPRNRGSVTYIAPPGNYDASDVVLELEFEGVKEKFSMVQVWPVRQVRPVTEKLPANHPLLTGQRVLDALFPCVQGGTTAIPGAFGCGKTVISQSLSKYSNSDVIIYVGCGERGNEMSEVLRDFPELTMEVDGKVESIMKRTALVANTSNMPVAAREASIYTGITLSEYFRDMGYHVSMMADSTSRWAEALREISGRLAEMPADSGYPAYLGARLASFYERAGRVKCLGNPEREGSVSIVGAVSPPGGDFSDPVTSATLGIVQVFWGLDKKLAQRKHFPSVNWLISYSKYMRALDEYYDKHFTEFVPLRTKAKEILQEEEDLAEIVQLVGKASLAETDKITLEVAKLIKDDFLQQNGYTPYDRFCPFYKTVGMLSNMISFYDMARRAVETTAQSDNKITWSIIREHMGEILYKLSSMKFKDPVKDGEAKIKADYAQLLEDMQNAFRSLED.

250–257 (GAFGCGKT) serves as a coordination point for ATP. Ser-384 bears the Phosphoserine; by AMPK mark.

The protein belongs to the ATPase alpha/beta chains family. V-ATPase is a heteromultimeric enzyme made up of two complexes: the ATP-hydrolytic V1 complex and the proton translocation V0 complex. The V1 complex consists of three catalytic AB heterodimers that form a heterohexamer, three peripheral stalks each consisting of EG heterodimers, one central rotor including subunits D and F, and the regulatory subunits C and H. The proton translocation complex V0 consists of the proton transport subunit a, a ring of proteolipid subunits c9c'', rotary subunit d, subunits e and f, and the accessory subunits ATP6AP1/Ac45 and ATP6AP2/PRR. Interacts with the V0 complex V-ATPase subunit a4 ATP6V0A4. Interacts with WFS1. Interacts with alpha-crystallin B chain/CRYAB and with MTOR, forming a ternary complex. Post-translationally, phosphorylation at Ser-384 by AMPK down-regulates its enzyme activity.

The protein localises to the cytoplasm. It localises to the cytosol. Its subcellular location is the cytoplasmic vesicle. The protein resides in the secretory vesicle. It is found in the clathrin-coated vesicle membrane. The protein localises to the lysosome. The catalysed reaction is ATP + H2O + 4 H(+)(in) = ADP + phosphate + 5 H(+)(out). ATP hydrolysis occurs at the interface between the nucleotide-binding domains of subunits A and B. ATP hydrolysis triggers a conformational change in the subunits D and F, which induces a shift of subunit d. The c-ring is subsequently rotated and results in a continuous proton translocation across the membrane. In terms of biological role, catalytic subunit of the V1 complex of vacuolar(H+)-ATPase (V-ATPase), a multisubunit enzyme composed of a peripheral complex (V1) that hydrolyzes ATP and a membrane integral complex (V0) that translocates protons. V-ATPase is responsible for acidifying and maintaining the pH of intracellular compartments and in some cell types, is targeted to the plasma membrane, where it is responsible for acidifying the extracellular environment. In aerobic conditions, involved in intracellular iron homeostasis, thus triggering the activity of Fe(2+) prolyl hydroxylase (PHD) enzymes, and leading to HIF1A hydroxylation and subsequent proteasomal degradation. May play a role in neurite development and synaptic connectivity. The polypeptide is V-type proton ATPase catalytic subunit A (Atp6v1a) (Mus musculus (Mouse)).